A 394-amino-acid chain; its full sequence is Cell division protein FtsZ (394 aa).

Residues 21–25 (GGGGN), 108–110 (GTG), Glu-139, Arg-143, and Asp-187 each bind GTP.

The protein belongs to the FtsZ family. As to quaternary structure, homodimer. Polymerizes to form a dynamic ring structure in a strictly GTP-dependent manner. Interacts directly with several other division proteins.

It is found in the cytoplasm. Functionally, essential cell division protein that forms a contractile ring structure (Z ring) at the future cell division site. The regulation of the ring assembly controls the timing and the location of cell division. One of the functions of the FtsZ ring is to recruit other cell division proteins to the septum to produce a new cell wall between the dividing cells. Binds GTP and shows GTPase activity. The polypeptide is Cell division protein FtsZ (Azotobacter vinelandii).